We begin with the raw amino-acid sequence, 444 residues long: Protein cereblon (444 aa).

The interval 1-52 (MAGEGDPEDAAHNMGNHLPLLPAEEEEEDEIEMEVEDQDNKEPKKPNIINFD) is disordered. The segment covering 23-37 (AEEEEEDEIEMEVED) has biased composition (acidic residues). Residues 80 to 321 (CPVIPVLPQV…CELDIMNKCT (242 aa)) enclose the Lon N-terminal domain. Residues 320–428 (CTSLCCKQCQ…LTRSALLPTI (109 aa)) enclose the CULT domain. Zn(2+)-binding residues include Cys325 and Cys328. (S)-thalidomide-binding residues include His380, Trp382, and Trp388. Cys393 and Cys396 together coordinate Zn(2+).

The protein belongs to the CRBN family. Component of a DCX (DDB1-CUL4-X-box) protein ligase complex, at least composed of CRBN, CUL4A, DDB1 and RBX1. Interacts directly with DDB1. Interacts with KCNT1. Interacts with ILF2. Interacts with TRAF6 and ECSIT. Ubiquitinated, ubiquitination is mediated by its own DCX protein ligase complex.

It is found in the cytoplasm. The protein localises to the nucleus. It localises to the membrane. Its pathway is protein modification; protein ubiquitination. Functionally, substrate recognition component of a DCX (DDB1-CUL4-X-box) E3 protein ligase complex that mediates the ubiquitination and subsequent proteasomal degradation of target proteins, such as MEIS2, ILF2 or GLUL. Normal degradation of key regulatory proteins is required for normal limb outgrowth and expression of the fibroblast growth factor FGF8. Maintains presynaptic glutamate release and consequently cognitive functions, such as memory and learning, by negatively regulating large-conductance calcium-activated potassium (BK) channels in excitatory neurons. Likely to function by regulating the assembly and neuronal surface expression of BK channels via its interaction with KCNT1. May also be involved in regulating anxiety-like behaviors via a BK channel-independent mechanism. Plays a negative role in TLR4 signaling by interacting with TRAF6 and ECSIT, leading to inhibition of ECSIT ubiquitination, an important step of the signaling. The protein is Protein cereblon (CRBN) of Bos taurus (Bovine).